A 178-amino-acid polypeptide reads, in one-letter code: ATP-dependent protease subunit HslV (178 aa).

Residue threonine 7 is part of the active site. Na(+) is bound by residues glycine 162, cysteine 165, and threonine 168.

It belongs to the peptidase T1B family. HslV subfamily. In terms of assembly, a double ring-shaped homohexamer of HslV is capped on each side by a ring-shaped HslU homohexamer. The assembly of the HslU/HslV complex is dependent on binding of ATP.

The protein resides in the cytoplasm. It carries out the reaction ATP-dependent cleavage of peptide bonds with broad specificity.. Allosterically activated by HslU binding. In terms of biological role, protease subunit of a proteasome-like degradation complex believed to be a general protein degrading machinery. This Azoarcus sp. (strain BH72) protein is ATP-dependent protease subunit HslV.